The following is a 380-amino-acid chain: Queuine tRNA-ribosyltransferase (380 aa).

Asp96 functions as the Proton acceptor in the catalytic mechanism. Substrate is bound by residues 96–100 (DSGGF), Asp150, Gln193, and Gly220. The interval 251–257 (GVGAPDS) is RNA binding. Asp270 acts as the Nucleophile in catalysis. Positions 275–279 (TRIAR) are RNA binding; important for wobble base 34 recognition. Zn(2+) is bound by residues Cys308, Cys310, Cys313, and His339.

This sequence belongs to the queuine tRNA-ribosyltransferase family. As to quaternary structure, homodimer. Within each dimer, one monomer is responsible for RNA recognition and catalysis, while the other monomer binds to the replacement base PreQ1. Requires Zn(2+) as cofactor.

The catalysed reaction is 7-aminomethyl-7-carbaguanine + guanosine(34) in tRNA = 7-aminomethyl-7-carbaguanosine(34) in tRNA + guanine. It functions in the pathway tRNA modification; tRNA-queuosine biosynthesis. Functionally, catalyzes the base-exchange of a guanine (G) residue with the queuine precursor 7-aminomethyl-7-deazaguanine (PreQ1) at position 34 (anticodon wobble position) in tRNAs with GU(N) anticodons (tRNA-Asp, -Asn, -His and -Tyr). Catalysis occurs through a double-displacement mechanism. The nucleophile active site attacks the C1' of nucleotide 34 to detach the guanine base from the RNA, forming a covalent enzyme-RNA intermediate. The proton acceptor active site deprotonates the incoming PreQ1, allowing a nucleophilic attack on the C1' of the ribose to form the product. After dissociation, two additional enzymatic reactions on the tRNA convert PreQ1 to queuine (Q), resulting in the hypermodified nucleoside queuosine (7-(((4,5-cis-dihydroxy-2-cyclopenten-1-yl)amino)methyl)-7-deazaguanosine). The protein is Queuine tRNA-ribosyltransferase of Streptococcus equi subsp. zooepidemicus (strain H70).